The chain runs to 309 residues: Tagatose-6-phosphate kinase (309 aa).

This sequence belongs to the carbohydrate kinase PfkB family. LacC subfamily.

The enzyme catalyses D-tagatofuranose 6-phosphate + ATP = D-tagatofuranose 1,6-bisphosphate + ADP + H(+). Its pathway is carbohydrate metabolism; D-tagatose 6-phosphate degradation; D-glyceraldehyde 3-phosphate and glycerone phosphate from D-tagatose 6-phosphate: step 1/2. The chain is Tagatose-6-phosphate kinase from Streptococcus pyogenes serotype M1.